A 591-amino-acid chain; its full sequence is MENPPDQTESKETLQQPITRRRTKGGLLTMPFIIANEGFEKVASYGLLQNMILYLMSDYRLGLVKGQTVLFMWVAATNFMPLVGAFLSDSYLGRFLTIVIASLSSLLGMVVLWLTAMLPQVKPSPCVATAGTNCSSATSSQLALLYTAFALISIGSGGIRPCSLAFGADQLDNKENPKNERVLESFFGWYYASSSVAVLIAFTVIVYIQDHLGWKIGFGIPAILMLLAGFLFVFASPLYVKRDVSKSLFTGLAQVVAAAYVKRNLTLPDHHDSRDCYYRLKDSELKAPSDKLRFLNKACAISNRDEDLGSDGLALNQWRLCTTDQVEKLKALVKVIPVWSTGIMMSINVSQNSFQLLQAKSMDRRLSSNSTFQIPAGSFGMFTIIALISWVVLYDRAILPLASKIRGRPVRVNVKIRMGLGLFISFLAMAVSATVEHYRRKTAISQGLANDANSTVSISAMWLVPQYVLHGLAEALTGIGQTEFFYTEFPKSMSSIAASLFGLGMAVANILASVILNAVKNSSKQGNVSWIEDNINKGHYDYYYWVLAILSFVNVIYYVVCSWSYGPTVDQVRNDKVNGMRKEEEEVIKLN.

11 consecutive transmembrane segments (helical) span residues 68-88, 98-118, 139-159, 186-206, 216-236, 329-349, 374-394, 418-438, 460-480, 496-516, and 543-563; these read TVLF…AFLS, IVIA…TAML, SSQL…SGGI, FFGW…TVIV, IGFG…VFAS, LKAL…SINV, IPAG…VVLY, MGLG…VEHY, AMWL…TGIG, IAAS…SVIL, and YYWV…VCSW.

It belongs to the major facilitator superfamily. Proton-dependent oligopeptide transporter (POT/PTR) (TC 2.A.17) family. In terms of tissue distribution, expressed in siliques, shoots and roots. Mainly detected in larger expanded leaves, in the companion cells of major veins.

It localises to the cell membrane. Its function is as follows. Low-affinity nitrate transporter involved in xylem-to-phloem transfer for redistributing nitrate into developing leaves. Not involved in dipeptides transport. In Arabidopsis thaliana (Mouse-ear cress), this protein is Protein NRT1/ PTR FAMILY 1.1 (NPF1.1).